The primary structure comprises 534 residues: ATP-dependent RNA helicase DBP3 (534 aa).

Positions 1–96 (MGSKRKHESG…VSSSSSGYTQ (96 aa)) are disordered. Residues 8-30 (ESGDVEVKKPKHDNEVKGKEKKE) are compositionally biased toward basic and acidic residues. A compositionally biased stretch (basic residues) spans 31 to 53 (KKEKKEKKEKKEKKEKKEKKEKK). Over residues 54–63 (EKKEKNEKKE) the composition is skewed to basic and acidic residues. The segment covering 82 to 92 (STVSTVSSSSS) has biased composition (low complexity). The short motif at 131–157 (LSFDHVQLQSKIAPIVTKFPKPTPIQS) is the Q motif element. The region spanning 160 to 330 (WPYLLNGDDV…ATFMNKAVKV (171 aa)) is the Helicase ATP-binding domain. 173–180 (AETGSGKT) contributes to the ATP binding site. Positions 278–281 (DEAD) match the DEAD box motif. The region spanning 359–504 (RLLQLLRQYG…PVPDELLKFG (146 aa)) is the Helicase C-terminal domain.

Belongs to the DEAD box helicase family. DDX5/DBP2 subfamily.

It localises to the nucleus. The protein resides in the nucleolus. It carries out the reaction ATP + H2O = ADP + phosphate + H(+). Its function is as follows. ATP-dependent RNA helicase required for 60S ribosomal subunit synthesis. Involved in efficient pre-rRNA processing, predominantly at site A3, which is necessary for the normal formation of 25S and 5.8S rRNAs. The polypeptide is ATP-dependent RNA helicase DBP3 (DBP3) (Meyerozyma guilliermondii (strain ATCC 6260 / CBS 566 / DSM 6381 / JCM 1539 / NBRC 10279 / NRRL Y-324) (Yeast)).